We begin with the raw amino-acid sequence, 128 residues long: uncharacterized protein (128 aa).

Positions 1 to 26 (MNSATSETTTNTGAAETTTSTGAAET) are disordered. The helical transmembrane segment at 105-127 (IANGLLTNNGISVFISTVLLAIV) threads the bilayer.

It belongs to the flocculin family.

The protein resides in the membrane. This is an uncharacterized protein from Saccharomyces cerevisiae (strain ATCC 204508 / S288c) (Baker's yeast).